A 545-amino-acid polypeptide reads, in one-letter code: Glutamine-dependent NAD(+) synthetase (545 aa).

Positions 5–247 (LRIAMAQFDF…DQWLVVDYMR (243 aa)) constitute a CN hydrolase domain. Catalysis depends on E46, which acts as the Proton acceptor; for glutaminase activity. The active-site For glutaminase activity is the K113. Y119 is a binding site for L-glutamine. The active-site Nucleophile; for glutaminase activity is C151. Residues S177 and K183 each contribute to the L-glutamine site. Residues 269–545 (VWRAVVRGVQ…RYPISNAYRG (277 aa)) form a ligase region. 292-299 (GLSGGIDS) is a binding site for ATP. N375 serves as a coordination point for deamido-NAD(+). T399 contacts ATP. Deamido-NAD(+) contacts are provided by E404 and K516.

The protein in the C-terminal section; belongs to the NAD synthetase family.

It catalyses the reaction deamido-NAD(+) + L-glutamine + ATP + H2O = L-glutamate + AMP + diphosphate + NAD(+) + H(+). The protein operates within cofactor biosynthesis; NAD(+) biosynthesis; NAD(+) from deamido-NAD(+) (L-Gln route): step 1/1. In terms of biological role, catalyzes the ATP-dependent amidation of deamido-NAD to form NAD. Uses L-glutamine as a nitrogen source. This Xylella fastidiosa (strain Temecula1 / ATCC 700964) protein is Glutamine-dependent NAD(+) synthetase.